A 208-amino-acid chain; its full sequence is Small ribosomal subunit protein eS8 (208 aa).

A disordered region spans residues 1–27 (MGISRDNWHKRRRTGGKRKPVHKKRKY). A compositionally biased stretch (basic residues) spans 8-26 (WHKRRRTGGKRKPVHKKRK).

This sequence belongs to the eukaryotic ribosomal protein eS8 family. Component of the small ribosomal subunit. Identified in a IGF2BP1-dependent mRNP granule complex containing untranslated mRNAs. Part of the small subunit (SSU) processome, composed of more than 70 proteins and the RNA chaperone small nucleolar RNA (snoRNA) U3.

The protein localises to the cytoplasm. Its subcellular location is the membrane. It is found in the nucleus. The protein resides in the nucleolus. In terms of biological role, component of the small ribosomal subunit. The ribosome is a large ribonucleoprotein complex responsible for the synthesis of proteins in the cell. Part of the small subunit (SSU) processome, first precursor of the small eukaryotic ribosomal subunit. During the assembly of the SSU processome in the nucleolus, many ribosome biogenesis factors, an RNA chaperone and ribosomal proteins associate with the nascent pre-rRNA and work in concert to generate RNA folding, modifications, rearrangements and cleavage as well as targeted degradation of pre-ribosomal RNA by the RNA exosome. This is Small ribosomal subunit protein eS8 (rps8) from Danio rerio (Zebrafish).